Reading from the N-terminus, the 287-residue chain is Large ribosomal subunit protein uL2 (287 aa).

A disordered region spans residues 221-287 (RGSVMNPCDH…SKRSRGGRDS (67 aa)). A compositionally biased stretch (basic residues) spans 258–287 (KTRKRNKPSNRYVLRKRRKTSKRSRGGRDS).

This sequence belongs to the universal ribosomal protein uL2 family. In terms of assembly, part of the 50S ribosomal subunit. Forms a bridge to the 30S subunit in the 70S ribosome.

In terms of biological role, one of the primary rRNA binding proteins. Required for association of the 30S and 50S subunits to form the 70S ribosome, for tRNA binding and peptide bond formation. It has been suggested to have peptidyltransferase activity; this is somewhat controversial. Makes several contacts with the 16S rRNA in the 70S ribosome. In Parasynechococcus marenigrum (strain WH8102), this protein is Large ribosomal subunit protein uL2.